We begin with the raw amino-acid sequence, 451 residues long: Probable V-type proton ATPase subunit H 1 (451 aa).

It belongs to the V-ATPase H subunit family. In terms of assembly, V-ATPase is a heteromultimeric enzyme made up of two complexes: the ATP-hydrolytic V1 complex and the proton translocation V0 complex. The V1 complex consists of three catalytic AB heterodimers that form a heterohexamer, three peripheral stalks each consisting of EG heterodimers, one central rotor including subunits D and F, and the regulatory subunits C and H. The proton translocation complex V0 consists of the proton transport subunit a, a ring of proteolipid subunits c9c'', rotary subunit d, subunits e and f, and the accessory subunits vah-19/Ac45 and vah-20/PRR.

In terms of biological role, subunit of the V1 complex of vacuolar(H+)-ATPase (V-ATPase), a multisubunit enzyme composed of a peripheral complex (V1) that hydrolyzes ATP and a membrane integral complex (V0) that translocates protons. V-ATPase is responsible for acidifying and maintaining the pH of intracellular compartments and in some cell types, is targeted to the plasma membrane, where it is responsible for acidifying the extracellular environment. Subunit H is essential for V-ATPase activity, but not for the assembly of the complex. This is Probable V-type proton ATPase subunit H 1 from Caenorhabditis elegans.